A 366-amino-acid polypeptide reads, in one-letter code: Peptide chain release factor 1 (366 aa).

Glutamine 239 bears the N5-methylglutamine mark.

It belongs to the prokaryotic/mitochondrial release factor family. In terms of processing, methylated by PrmC. Methylation increases the termination efficiency of RF1.

Its subcellular location is the cytoplasm. Functionally, peptide chain release factor 1 directs the termination of translation in response to the peptide chain termination codons UAG and UAA. The sequence is that of Peptide chain release factor 1 from Albidiferax ferrireducens (strain ATCC BAA-621 / DSM 15236 / T118) (Rhodoferax ferrireducens).